The sequence spans 278 residues: Diaminopimelate epimerase (278 aa).

Residues asparagine 13 and asparagine 66 each coordinate substrate. The active-site Proton donor is cysteine 75. Substrate contacts are provided by residues 76 to 77 (GN), asparagine 162, asparagine 195, and 213 to 214 (ER). Cysteine 222 functions as the Proton acceptor in the catalytic mechanism. 223–224 (GT) provides a ligand contact to substrate.

This sequence belongs to the diaminopimelate epimerase family. As to quaternary structure, homodimer.

It is found in the cytoplasm. The enzyme catalyses (2S,6S)-2,6-diaminopimelate = meso-2,6-diaminopimelate. It participates in amino-acid biosynthesis; L-lysine biosynthesis via DAP pathway; DL-2,6-diaminopimelate from LL-2,6-diaminopimelate: step 1/1. In terms of biological role, catalyzes the stereoinversion of LL-2,6-diaminopimelate (L,L-DAP) to meso-diaminopimelate (meso-DAP), a precursor of L-lysine and an essential component of the bacterial peptidoglycan. The protein is Diaminopimelate epimerase of Trichodesmium erythraeum (strain IMS101).